A 616-amino-acid polypeptide reads, in one-letter code: Vitamin B12 transporter BtuB (616 aa).

Positions 1–20 are cleaved as a signal peptide; the sequence is MIKKISLLTALSVTAFSGWA. Positions 26–33 match the TonB box motif; that stretch reads DSLVVTAN. Residues 38-152 form the TBDR plug domain; the sequence is PVNTVLAPTS…IGGVVNIITT (115 aa). Cyanocob(III)alamin contacts are provided by residues Leu83, Ser85, Asn92, and 110-111; that span reads VT. The TBDR beta-barrel domain occupies 155–616; that stretch reads KDGTTLNAGI…EYTLSGSYTF (462 aa). Beta stranded transmembrane passes span 158-165, 169-178, and 184-195; these read TTLNAGIG, YQNYGGSTQQ, and TRVTLAGDYTYT. Ca(2+) is bound by residues Asp199, Gln211, Asp213, and Asp215. 2 beta stranded membrane-spanning segments follow: residues 217–227 and 232–248; these read FMNKTLYGALE and DQWT…NRTA. Tyr249, Asp250, and Asp263 together coordinate Ca(2+). Beta stranded transmembrane passes span 265 to 279, 281 to 298, 311 to 327, 330 to 339, 355 to 371, 373 to 383, 387 to 402, 405 to 419, 436 to 445, 451 to 460, 475 to 492, 496 to 511, 519 to 531, 537 to 552, 560 to 574, 587 to 598, and 604 to 616; these read RQLY…LRFN, DLFH…KDYN, TLDE…NAVD, HGNIGAGVDW, YDLR…QKFG, VTLEGAVRSDD, FGRH…WEFI, YRFI…KAPN, ESKQWEGAFE, VNWRVSAYRN, YYNV…TASF, PLTH…ARNA, RRAK…QLDT, DWSL…YDTD, NVKL…VAVS, IANLFDKDYETA, and AGRE…SYTF. Thr311 serves as a coordination point for cyanocob(III)alamin. Arg519 lines the cyanocob(III)alamin pocket. The TonB C-terminal box motif lies at 599 to 616; it reads YGYATAGREYTLSGSYTF.

Belongs to the TonB-dependent receptor family. BtuB (TC 1.B.14.3.1) subfamily.

It is found in the cell outer membrane. Involved in the active translocation of vitamin B12 (cyanocobalamin) across the outer membrane to the periplasmic space. It derives its energy for transport by interacting with the trans-periplasmic membrane protein TonB. This is Vitamin B12 transporter BtuB from Cronobacter sakazakii (strain ATCC BAA-894) (Enterobacter sakazakii).